The primary structure comprises 327 residues: Porphobilinogen deaminase (327 aa).

Position 251 is an S-(dipyrrolylmethanemethyl)cysteine (cysteine 251).

This sequence belongs to the HMBS family. Dipyrromethane serves as cofactor.

It catalyses the reaction 4 porphobilinogen + H2O = hydroxymethylbilane + 4 NH4(+). Its pathway is porphyrin-containing compound metabolism; protoporphyrin-IX biosynthesis; coproporphyrinogen-III from 5-aminolevulinate: step 2/4. Tetrapolymerization of the monopyrrole PBG into the hydroxymethylbilane pre-uroporphyrinogen in several discrete steps. This Kluyveromyces lactis (strain ATCC 8585 / CBS 2359 / DSM 70799 / NBRC 1267 / NRRL Y-1140 / WM37) (Yeast) protein is Porphobilinogen deaminase (HEM3).